Reading from the N-terminus, the 328-residue chain is Formimidoylglutamase (328 aa).

Mn(2+)-binding residues include His-133, Asp-159, His-161, Asp-163, Asp-253, and Asp-255.

It belongs to the arginase family. The cofactor is Mn(2+).

The catalysed reaction is N-formimidoyl-L-glutamate + H2O = formamide + L-glutamate. It participates in amino-acid degradation; L-histidine degradation into L-glutamate; L-glutamate from N-formimidoyl-L-glutamate (hydrolase route): step 1/1. Functionally, catalyzes the conversion of N-formimidoyl-L-glutamate to L-glutamate and formamide. The protein is Formimidoylglutamase of Streptococcus pyogenes serotype M28 (strain MGAS6180).